A 209-amino-acid chain; its full sequence is tRNA (guanine-N(7)-)-methyltransferase (209 aa).

The S-adenosyl-L-methionine site is built by D35, E60, N87, and D113. D113 is an active-site residue. Substrate-binding residues include K117 and D149.

It belongs to the class I-like SAM-binding methyltransferase superfamily. TrmB family.

It catalyses the reaction guanosine(46) in tRNA + S-adenosyl-L-methionine = N(7)-methylguanosine(46) in tRNA + S-adenosyl-L-homocysteine. Its pathway is tRNA modification; N(7)-methylguanine-tRNA biosynthesis. Catalyzes the formation of N(7)-methylguanine at position 46 (m7G46) in tRNA. The chain is tRNA (guanine-N(7)-)-methyltransferase from Prochlorococcus marinus (strain AS9601).